The chain runs to 602 residues: Probable ATP-dependent RNA helicase ddx18 (602 aa).

Residues 1 to 31 (MVSTKVKPTTTTTPTTTVNKTTQPTTTTTAS) are compositionally biased toward low complexity. A disordered region spans residues 1-108 (MVSTKVKPTT…NNDNNTGNVS (108 aa)). The span at 50 to 63 (LASTPSVKQIQSQK) shows a compositional bias: polar residues. The span at 79 to 99 (DQEEEDQEEEEQEQEEEENEN) shows a compositional bias: acidic residues. The Q motif motif lies at 119–147 (IEFSNLPIEENTKKSIEEMGFKKMTPIQA). The Helicase ATP-binding domain maps to 150-325 (ILPLLEGKDL…KVSLNNSPVY (176 aa)). 163–170 (ARTGSGKT) lines the ATP pocket. A DEAD box motif is present at residues 273–276 (DEAD). The Helicase C-terminal domain occupies 339–509 (GLEQGYVVCP…NVQDQLEKVV (171 aa)). The interval 568 to 602 (SGKADFQKKSNNKSGFAQKQYGSKFPPKDGRQFDR) is disordered. Over residues 579 to 588 (NKSGFAQKQY) the composition is skewed to polar residues. The span at 593 to 602 (PPKDGRQFDR) shows a compositional bias: basic and acidic residues.

Belongs to the DEAD box helicase family. DDX18/HAS1 subfamily.

The protein resides in the nucleus. Its subcellular location is the nucleolus. It localises to the chromosome. It catalyses the reaction ATP + H2O = ADP + phosphate + H(+). In terms of biological role, ATP-binding RNA helicase which may be involved in the ribosome biogenesis. The chain is Probable ATP-dependent RNA helicase ddx18 (ddx18) from Dictyostelium discoideum (Social amoeba).